We begin with the raw amino-acid sequence, 344 residues long: MASSRVDTINLRIWLVSIICAALSFINVTVHLIAINFPNLGFPCAYFEINDLKAVNLSANNEIYQMTHQLYINPVQIICYVLIMAILFLLIIIYYIVCCAKVFSSNKTSNVNQTTRDITWMGDTSSCFQFILIMDTFQLFVTALSFRLVALGAFAYSIFFVCFTTFNVTLITQFQSADKSFFAFQKIHPNLKGTVQFKTVVINLSELMLGYSTMFLGITTCLGVGNSIYIRSITVAFSSINTFLVMACIYSIVIEAVLVRYVKPLFGYYVGMFCGAVGLSFPILQYETFFESEWSTGLIINLSVVAIISIGFIICRLVRYLVKKKRRYKQLLNAESSSLMDENE.

Residues 1–12 lie on the Intravirion side of the membrane; sequence MASSRVDTINLR. A helical membrane pass occupies residues 13-33; it reads IWLVSIICAALSFINVTVHLI. At 34–76 the chain is on the virion surface side; it reads AINFPNLGFPCAYFEINDLKAVNLSANNEIYQMTHQLYINPVQ. The helical transmembrane segment at 77–97 threads the bilayer; that stretch reads IICYVLIMAILFLLIIIYYIV. The Intravirion portion of the chain corresponds to 98 to 125; it reads CCAKVFSSNKTSNVNQTTRDITWMGDTS. Residues 126-146 traverse the membrane as a helical segment; it reads SCFQFILIMDTFQLFVTALSF. A topological domain (virion surface) is located at residue arginine 147. The helical transmembrane segment at 148-168 threads the bilayer; it reads LVALGAFAYSIFFVCFTTFNV. Residues 169–203 lie on the Intravirion side of the membrane; it reads TLITQFQSADKSFFAFQKIHPNLKGTVQFKTVVIN. Residues 204–224 traverse the membrane as a helical segment; sequence LSELMLGYSTMFLGITTCLGV. The Virion surface segment spans residues 225–238; the sequence is GNSIYIRSITVAFS. A helical membrane pass occupies residues 239-259; that stretch reads SINTFLVMACIYSIVIEAVLV. Residues 260–263 lie on the Intravirion side of the membrane; it reads RYVK. A helical membrane pass occupies residues 264 to 284; that stretch reads PLFGYYVGMFCGAVGLSFPIL. The Virion surface portion of the chain corresponds to 285–293; the sequence is QYETFFESE. A helical transmembrane segment spans residues 294-314; that stretch reads WSTGLIINLSVVAIISIGFII. Topologically, residues 315–344 are intravirion; that stretch reads CRLVRYLVKKKRRYKQLLNAESSSLMDENE.

It belongs to the herpesviridae glycoprotein M family. As to quaternary structure, interacts (via N-terminus) with gN (via N-terminus). The gM-gN heterodimer forms the gCII complex.

Its subcellular location is the virion membrane. The protein localises to the host Golgi apparatus. It is found in the host trans-Golgi network. It localises to the host endosome membrane. The protein resides in the host nucleus inner membrane. In terms of biological role, envelope glycoprotein important for virion assembly and egress. Plays a role in the correct incorporation of gH-gL into virion membrane. Directs the glycoprotein N (gN) to the host trans-Golgi network. The chain is Envelope glycoprotein M from Homo sapiens (Human).